Here is a 143-residue protein sequence, read N- to C-terminus: MKNTSALAETAALWAAVRFTADGLVPVIAQQHDSGEVLMMAWMNREALEETLVTGKACYWSRSRGRLWRKGESSGQTQKVLALRLDCDGDTILLLVDQTGVACHTGRRSCFFNEVGPTGEITVVSAPLVTPEALYGAEGHSHP.

Aspartate 86 provides a ligand contact to Mg(2+). Position 87 (cysteine 87) interacts with Zn(2+). Residues aspartate 88 and aspartate 90 each contribute to the Mg(2+) site. Residues cysteine 103 and cysteine 110 each contribute to the Zn(2+) site.

The protein belongs to the PRA-CH family. Homodimer. Mg(2+) serves as cofactor. It depends on Zn(2+) as a cofactor.

The protein resides in the cytoplasm. The enzyme catalyses 1-(5-phospho-beta-D-ribosyl)-5'-AMP + H2O = 1-(5-phospho-beta-D-ribosyl)-5-[(5-phospho-beta-D-ribosylamino)methylideneamino]imidazole-4-carboxamide. The protein operates within amino-acid biosynthesis; L-histidine biosynthesis; L-histidine from 5-phospho-alpha-D-ribose 1-diphosphate: step 3/9. Catalyzes the hydrolysis of the adenine ring of phosphoribosyl-AMP. This is Phosphoribosyl-AMP cyclohydrolase from Rhodospirillum rubrum (strain ATCC 11170 / ATH 1.1.1 / DSM 467 / LMG 4362 / NCIMB 8255 / S1).